Here is a 129-residue protein sequence, read N- to C-terminus: D-ribose pyranase (129 aa).

Histidine 20 serves as the catalytic Proton donor. Substrate is bound by residues aspartate 28, histidine 96, and 118 to 120 (YAN).

This sequence belongs to the RbsD / FucU family. RbsD subfamily. Homodecamer.

Its subcellular location is the cytoplasm. It catalyses the reaction beta-D-ribopyranose = beta-D-ribofuranose. Its pathway is carbohydrate metabolism; D-ribose degradation; D-ribose 5-phosphate from beta-D-ribopyranose: step 1/2. Functionally, catalyzes the interconversion of beta-pyran and beta-furan forms of D-ribose. This is D-ribose pyranase from Streptomyces coelicolor (strain ATCC BAA-471 / A3(2) / M145).